Consider the following 234-residue polypeptide: Phosphoribosylaminoimidazole-succinocarboxamide synthase (234 aa).

It belongs to the SAICAR synthetase family.

It carries out the reaction 5-amino-1-(5-phospho-D-ribosyl)imidazole-4-carboxylate + L-aspartate + ATP = (2S)-2-[5-amino-1-(5-phospho-beta-D-ribosyl)imidazole-4-carboxamido]succinate + ADP + phosphate + 2 H(+). The protein operates within purine metabolism; IMP biosynthesis via de novo pathway; 5-amino-1-(5-phospho-D-ribosyl)imidazole-4-carboxamide from 5-amino-1-(5-phospho-D-ribosyl)imidazole-4-carboxylate: step 1/2. The chain is Phosphoribosylaminoimidazole-succinocarboxamide synthase from Clostridium botulinum (strain Langeland / NCTC 10281 / Type F).